Here is a 611-residue protein sequence, read N- to C-terminus: Zinc metalloproteinase nas-31 (611 aa).

The first 17 residues, 1 to 17 (MILQLLFYSLFTHLAVS), serve as a signal peptide directing secretion. Positions 18–158 (QIDVNQALNQ…TVSTASRARR (141 aa)) are excised as a propeptide. Residues Asn53 and Asn67 are each glycosylated (N-linked (GlcNAc...) asparagine). The span at 82 to 95 (NAGTNQENGATEQQ) shows a compositional bias: polar residues. The segment at 82–103 (NAGTNQENGATEQQKPLREKPR) is disordered. The region spanning 159 to 354 (QAYRDRYYPS…SMMNEHYKCK (196 aa)) is the Peptidase M12A domain. Asn200 carries an N-linked (GlcNAc...) asparagine glycan. Cystine bridges form between Cys203/Cys353, Cys224/Cys243, Cys357/Cys376, Cys379/Cys390, Cys397/Cys428, Cys455/Cys476, Cys532/Cys564, Cys539/Cys557, and Cys548/Cys561. His251 lines the Zn(2+) pocket. The active site involves Glu252. 2 residues coordinate Zn(2+): His255 and His261. The EGF-like domain occupies 340–396 (GFYDISMMNEHYKCKELCPAASSAQCKNGGFPSPRNCAICICPSGYGGILCDQRPPG). Residues 397–516 (CGDSVTATTT…LEYRAVTPSV (120 aa)) form the CUB domain. The N-linked (GlcNAc...) asparagine glycan is linked to Asn424. The ShKT domain occupies 532–564 (CQDLHPNCDFYKFFGMCRSKKIRSNCKFTCHDC).

It depends on Zn(2+) as a cofactor. As to expression, expressed in excretory cell and in amphid and phasmid sheath glia.

It localises to the secreted. Its function is as follows. Metalloprotease. The sequence is that of Zinc metalloproteinase nas-31 (nas-31) from Caenorhabditis elegans.